Consider the following 412-residue polypeptide: Putative competence-damage inducible protein (412 aa).

Belongs to the CinA family.

This is Putative competence-damage inducible protein from Bacillus cereus (strain Q1).